A 500-amino-acid chain; its full sequence is L-arabinose isomerase (500 aa).

The Mn(2+) site is built by Glu306, Glu333, His350, and His450.

It belongs to the arabinose isomerase family. Homohexamer. Requires Mn(2+) as cofactor.

The catalysed reaction is beta-L-arabinopyranose = L-ribulose. Its pathway is carbohydrate degradation; L-arabinose degradation via L-ribulose; D-xylulose 5-phosphate from L-arabinose (bacterial route): step 1/3. In terms of biological role, catalyzes the conversion of L-arabinose to L-ribulose. The chain is L-arabinose isomerase from Escherichia coli O17:K52:H18 (strain UMN026 / ExPEC).